The following is a 238-amino-acid chain: MGKVLSSSKEAAKLIHDGDTLIAGGFGLCGIPEQLILSIRDQGVKDLTVVSNNCGVDDWGLGLLLANKQIKKMIASYVGENKIFERQFLSGELEVELVPQGTLAERIRAGGAGIPGFYTATGVGTSIAEGKEHKTFGGRTYVLERGITGDVAIVKAWKADTMGNLIFRKTARNFNPIAAMAGKITIAEAEEIVEAGELDPDHIHTPGIYVQHVVLGASQEKRIEKRTVQQASGKGEAK.

Gly-24 to Gly-30 contributes to the CoA binding site.

The protein belongs to the 3-oxoacid CoA-transferase subunit A family. Heterodimer of a subunit A and a subunit B.

The catalysed reaction is a 3-oxo acid + succinyl-CoA = a 3-oxoacyl-CoA + succinate. This chain is Probable succinyl-CoA:3-ketoacid coenzyme A transferase subunit A (scoA), found in Bacillus subtilis (strain 168).